We begin with the raw amino-acid sequence, 456 residues long: Phosphomethylpyrimidine synthase (456 aa).

Substrate-binding positions include N80, M109, Y139, H175, 195–197 (SRG), 236–239 (DSLR), and E275. Residue H279 participates in Zn(2+) binding. Position 302 (Y302) interacts with substrate. Residue H343 coordinates Zn(2+). The [4Fe-4S] cluster site is built by C423, C426, and C431.

This sequence belongs to the ThiC family. Requires [4Fe-4S] cluster as cofactor.

The catalysed reaction is 5-amino-1-(5-phospho-beta-D-ribosyl)imidazole + S-adenosyl-L-methionine = 4-amino-2-methyl-5-(phosphooxymethyl)pyrimidine + CO + 5'-deoxyadenosine + formate + L-methionine + 3 H(+). The protein operates within cofactor biosynthesis; thiamine diphosphate biosynthesis. In terms of biological role, catalyzes the synthesis of the hydroxymethylpyrimidine phosphate (HMP-P) moiety of thiamine from aminoimidazole ribotide (AIR) in a radical S-adenosyl-L-methionine (SAM)-dependent reaction. This Synechococcus elongatus (strain ATCC 33912 / PCC 7942 / FACHB-805) (Anacystis nidulans R2) protein is Phosphomethylpyrimidine synthase.